Reading from the N-terminus, the 148-residue chain is 3-hydroxyacyl-[acyl-carrier-protein] dehydratase FabZ (148 aa).

Residue His55 is part of the active site.

Belongs to the thioester dehydratase family. FabZ subfamily.

Its subcellular location is the cytoplasm. The catalysed reaction is a (3R)-hydroxyacyl-[ACP] = a (2E)-enoyl-[ACP] + H2O. In terms of biological role, involved in unsaturated fatty acids biosynthesis. Catalyzes the dehydration of short chain beta-hydroxyacyl-ACPs and long chain saturated and unsaturated beta-hydroxyacyl-ACPs. The protein is 3-hydroxyacyl-[acyl-carrier-protein] dehydratase FabZ of Haemophilus influenzae (strain PittEE).